A 741-amino-acid polypeptide reads, in one-letter code: NAD(P)H-quinone oxidoreductase subunit 5, chloroplastic (741 aa).

Transmembrane regions (helical) follow at residues 9 to 29, 40 to 60, 89 to 109, 125 to 145, 147 to 167, 185 to 205, 219 to 239, 258 to 278, 284 to 304, 327 to 347, 354 to 374, 396 to 416, 425 to 445, 549 to 569, 605 to 625, and 721 to 741; these read WIIP…LLLF, WAFQ…NLSI, IDPL…MVLI, FAYM…SNLI, IYIF…FWFT, GDFG…SFEF, NEVN…GAIA, TPIS…FLVA, FIVI…TVFF, LGYM…FHLI, ALLF…VGYC, NSFL…CFWS, WLYS…TAFY, LFPI…GIPF, VFSV…YKPV, and YLFF…FLNF.

Belongs to the complex I subunit 5 family. In terms of assembly, NDH is composed of at least 16 different subunits, 5 of which are encoded in the nucleus.

The protein resides in the plastid. Its subcellular location is the chloroplast thylakoid membrane. The enzyme catalyses a plastoquinone + NADH + (n+1) H(+)(in) = a plastoquinol + NAD(+) + n H(+)(out). It carries out the reaction a plastoquinone + NADPH + (n+1) H(+)(in) = a plastoquinol + NADP(+) + n H(+)(out). NDH shuttles electrons from NAD(P)H:plastoquinone, via FMN and iron-sulfur (Fe-S) centers, to quinones in the photosynthetic chain and possibly in a chloroplast respiratory chain. The immediate electron acceptor for the enzyme in this species is believed to be plastoquinone. Couples the redox reaction to proton translocation, and thus conserves the redox energy in a proton gradient. This chain is NAD(P)H-quinone oxidoreductase subunit 5, chloroplastic (ndhF), found in Flaveria ramosissima (Yellowtops).